A 250-amino-acid polypeptide reads, in one-letter code: 2,3-bisphosphoglycerate-dependent phosphoglycerate mutase (250 aa).

Substrate is bound by residues 8–15, 21–22, arginine 60, 87–90, lysine 98, 114–115, and 183–184; these read RHGESKWN, TG, ERHY, RR, and GN. The active-site Tele-phosphohistidine intermediate is histidine 9. Glutamate 87 acts as the Proton donor/acceptor in catalysis.

This sequence belongs to the phosphoglycerate mutase family. BPG-dependent PGAM subfamily.

The catalysed reaction is (2R)-2-phosphoglycerate = (2R)-3-phosphoglycerate. It participates in carbohydrate degradation; glycolysis; pyruvate from D-glyceraldehyde 3-phosphate: step 3/5. Catalyzes the interconversion of 2-phosphoglycerate and 3-phosphoglycerate. The sequence is that of 2,3-bisphosphoglycerate-dependent phosphoglycerate mutase from Borrelia recurrentis (strain A1).